The following is a 30-amino-acid chain: Alpha-conotoxin EIVA (30 aa).

Intrachain disulfides connect cysteine 2-cysteine 16, cysteine 3-cysteine 11, and cysteine 14-cysteine 24. Proline 7, proline 13, proline 21, proline 22, and proline 27 each carry 4-hydroxyproline. Glycine 30 bears the Glycine amide mark.

Expressed by the venom duct.

It localises to the secreted. Its function is as follows. Alpha-conotoxins act on postsynaptic membranes, they bind to the nicotinic acetylcholine receptors (nAChR) and thus inhibit them. This toxin binds with high affinity to both fetal (alpha-1-beta-1-epsilon-delta (CHRNA1-CHRNB1-CHRND-CHRNE) subunits) and adult (alpha-1/beta-1/gamma/delta subunits) mammalian muscle nicotinic acetylcholine receptors (nAChR). The sequence is that of Alpha-conotoxin EIVA from Conus ermineus (Agate cone).